Consider the following 937-residue polypeptide: Protein SEY1 homolog (937 aa).

Over 1 to 848 (MEKGVEKTQI…ETGSKMSLKN (848 aa)) the chain is Cytoplasmic. Positions 34–280 (GFSYNVIAVL…IPSDGFAQYC (247 aa)) constitute a GB1/RHD3-type G domain. Position 44 to 51 (44 to 51 (GSQSSGKS)) interacts with GTP. Coiled-coil stretches lie at residues 319–339 (NKEI…NFKE) and 725–750 (YLDE…IIIQ). Residues 849–869 (VPVVFWIILLLFGWNEILFFI) traverse the membrane as a helical segment. The Lumenal segment spans residues 870–872 (RMF). A helical membrane pass occupies residues 873–893 (FKLNVILPLFFAAAFIVSTFV). Residues 894 to 937 (YNGNTQALSYINKIIFYMAKNSYNFFKHIQAISNPPPKNVQKQE) lie on the Cytoplasmic side of the membrane.

The protein belongs to the TRAFAC class dynamin-like GTPase superfamily. GB1/RHD3 GTPase family. RHD3 subfamily.

Its subcellular location is the endoplasmic reticulum membrane. In terms of biological role, probable GTP-binding protein involved in generating and maintaining the structure of the tubular endoplasmic reticulum network. This chain is Protein SEY1 homolog, found in Plasmodium falciparum (isolate 3D7).